The primary structure comprises 181 residues: Peptide deformylase (181 aa).

The Fe cation site is built by cysteine 99 and histidine 141. Residue glutamate 142 is part of the active site. Residue histidine 145 coordinates Fe cation.

It belongs to the polypeptide deformylase family. The cofactor is Fe(2+).

The catalysed reaction is N-terminal N-formyl-L-methionyl-[peptide] + H2O = N-terminal L-methionyl-[peptide] + formate. Functionally, removes the formyl group from the N-terminal Met of newly synthesized proteins. Requires at least a dipeptide for an efficient rate of reaction. N-terminal L-methionine is a prerequisite for activity but the enzyme has broad specificity at other positions. The polypeptide is Peptide deformylase (Chlamydia muridarum (strain MoPn / Nigg)).